A 39-amino-acid polypeptide reads, in one-letter code: Large ribosomal subunit protein bL12 (39 aa).

This sequence belongs to the bacterial ribosomal protein bL12 family. In terms of assembly, homodimer. Part of the ribosomal stalk of the 50S ribosomal subunit. Forms a multimeric L10(L12)X complex, where L10 forms an elongated spine to which 2 to 4 L12 dimers bind in a sequential fashion. Binds GTP-bound translation factors.

Its function is as follows. Forms part of the ribosomal stalk which helps the ribosome interact with GTP-bound translation factors. Is thus essential for accurate translation. In Arthrobacter glacialis, this protein is Large ribosomal subunit protein bL12 (rplL).